The sequence spans 479 residues: Cyclin-dependent kinase F-1 (479 aa).

The region spanning 24 to 419 is the Protein kinase domain; sequence YEVLGRAGSG…AADLLNDPYF (396 aa). Residues 30 to 38 and Lys53 each bind ATP; that span reads AGSGAYADV. Residue Asp146 is the Proton acceptor of the active site. Position 291 is a phosphothreonine (Thr291). The segment at 429 to 479 is disordered; it reads EGLQVPESKDEDDDSTEEWANFRGGDSDSDFDEFGSMDVTKTDKGFSIRFS. The span at 468-479 shows a compositional bias: basic and acidic residues; the sequence is TKTDKGFSIRFS.

It belongs to the protein kinase superfamily. CMGC Ser/Thr protein kinase family. CDC2/CDKX subfamily.

It carries out the reaction L-seryl-[protein] + ATP = O-phospho-L-seryl-[protein] + ADP + H(+). The enzyme catalyses L-threonyl-[protein] + ATP = O-phospho-L-threonyl-[protein] + ADP + H(+). The catalysed reaction is [DNA-directed RNA polymerase] + ATP = phospho-[DNA-directed RNA polymerase] + ADP + H(+). This Oryza sativa subsp. japonica (Rice) protein is Cyclin-dependent kinase F-1 (CDKF-1).